A 588-amino-acid chain; its full sequence is Disabled homolog 1 (588 aa).

The tract at residues 1-26 is disordered; sequence MSTETELQVAVKTSAKKDSRKKGQDR. Positions 15–26 are enriched in basic and acidic residues; the sequence is AKKDSRKKGQDR. Positions 36–189 constitute a PID domain; that stretch reads KGEGVRYKAK…CEQAVYQTIL (154 aa). Y198, Y220, and Y232 each carry phosphotyrosine. Disordered stretches follow at residues 417–443, 451–470, and 502–588; these read LTPLATVPGTSDSTRSSPQTDKPRQKM, FQMAQPPPVPSRKPDQPSLT, and LTPV…QAGS. Positions 424–436 are enriched in polar residues; that stretch reads PGTSDSTRSSPQT. Low complexity-rich tracts occupy residues 503–512 and 520–534; these read TPVTSTTPST and PRQSSPSKSSASHAS. At S524 the chain carries Phosphoserine; by CDK5. Acidic residues predominate over residues 537–546; sequence TTDDIFEEGF.

As to quaternary structure, associates with the SH2 domains of SRC, FYN and ABL. Interacts (phosphorylated on tyrosine residues) with CRK and CRKL (via respective SH2 domain). Interacts with SIAH1, LRP8 and VLDLR. Interacts with LRP1. Interacts with APLP1 (via NPXY motif). Interacts with DAB2IP. Interacts with ZSWIM8. Phosphorylated by FYN on Tyr-198 and Tyr-220 upon reelin induction in embryonic neurons. Also phosphorylated on Ser-524 independently of reelin signaling. Post-translationally, ubiquitinated by various cullin-5-RING E3 ubiquitin-protein ligase complexes (ECS complexes) following ligand-binding and phosphorylation, leading to its degradation. Ubiquitinated by the ECS(SOCS7) complex in the cortical plate of the developing cerebral cortex following ligand-binding and phosphorylation by FYN, leading to its degradation by the proteasome. Recognized by ZSWIM8 through a disorder targets misorder mechanism that eliminates misfolded DAB1 via ubiquitination and proteasomal degradation. In terms of tissue distribution, mainly expressed in brain.

It localises to the cytoplasm. Signaling adapter of the reelin-mediated signaling pathway, which regulates the migration and differentiation of postmitotic neurons during brain development. Mediates intracellular transduction of Reelin signaling following reelin (RELN)-binding to its receptor: acts by docking proteins through its phosphotyrosine residues and PID domain. The sequence is that of Disabled homolog 1 (DAB1) from Homo sapiens (Human).